Consider the following 234-residue polypeptide: Ribose-5-phosphate isomerase A (234 aa).

Substrate is bound by residues 39-42, 92-95, and 105-108; these read TGST, DGAD, and KGGG. Glu-114 serves as the catalytic Proton acceptor. Lys-132 contributes to the substrate binding site.

This sequence belongs to the ribose 5-phosphate isomerase family. As to quaternary structure, homodimer.

The catalysed reaction is aldehydo-D-ribose 5-phosphate = D-ribulose 5-phosphate. The protein operates within carbohydrate degradation; pentose phosphate pathway; D-ribose 5-phosphate from D-ribulose 5-phosphate (non-oxidative stage): step 1/1. Its function is as follows. Catalyzes the reversible conversion of ribose-5-phosphate to ribulose 5-phosphate. This chain is Ribose-5-phosphate isomerase A, found in Albidiferax ferrireducens (strain ATCC BAA-621 / DSM 15236 / T118) (Rhodoferax ferrireducens).